Consider the following 491-residue polypeptide: Glutamyl-tRNA(Gln) amidotransferase subunit A (491 aa).

Residues Lys-77 and Ser-152 each act as charge relay system in the active site. Ser-176 acts as the Acyl-ester intermediate in catalysis.

This sequence belongs to the amidase family. GatA subfamily. As to quaternary structure, heterotrimer of A, B and C subunits.

It carries out the reaction L-glutamyl-tRNA(Gln) + L-glutamine + ATP + H2O = L-glutaminyl-tRNA(Gln) + L-glutamate + ADP + phosphate + H(+). Functionally, allows the formation of correctly charged Gln-tRNA(Gln) through the transamidation of misacylated Glu-tRNA(Gln) in organisms which lack glutaminyl-tRNA synthetase. The reaction takes place in the presence of glutamine and ATP through an activated gamma-phospho-Glu-tRNA(Gln). This is Glutamyl-tRNA(Gln) amidotransferase subunit A from Chlamydia abortus (strain DSM 27085 / S26/3) (Chlamydophila abortus).